The chain runs to 661 residues: MKFTRTLVLASTSLLATVATSQAQEVKRDTKKQGEVVLKPITIISHGKDNIEATGGTVLTYKDIEKLQPANVSELFSRQSSIAVSGGGGPSKRIHVLGMEQSNLAVSVDGVPQTATSWHHTGSNVIDPAFLKRVEVEAGAAAADSGFGAAAGAIRYETVNALDLLEPGKTFGARIIGSYGTNGRGFSGSTAAYGLKDGFDWLLMLHGTSGHNYKNGDGTEILGTEPAARNILGKAGYEFDGNRIDIGYERSRDKADRLIKMNMGLPGDTEYPLEVARDSVNIKYTRTDATDMWDPEVQLYYNRNDYWRNDYQNRTNGNMILKEDLYGGKLQNTFTIDYGKITAGIDFGKHDYNTDNYGHNDRRYRKFNTQQVGAFTQGRFEFDNGFSLSTGARYDYSRFADWNDEVFSDSGASVNGTLSYKFNEHIEVFAGASRTWLGYVLGDYGYVHARNNAFYTDPTFSPGRARNYKAGVNFGGADWSAGITLFDTRIAGLPNYDSQKLGNDPEEYRSRGFTLNARYIWNYTTIGATFTKAKVTAGDDPVLPNSGSFMPIGDMATLFIDQEIPDYNMKVGATLAWAGRISDEAATAANFYDQPAYTVVNAYAEWNPPAVKNMTLRVGVENLFNENYYERTSFAPSQNRGGIDPVWAPGRTFTFQTAFKF.

The first 23 residues, 1 to 23 (MKFTRTLVLASTSLLATVATSQA), serve as a signal peptide directing secretion. The TBDR plug domain maps to 48 to 159 (KDNIEATGGT…AAGAIRYETV (112 aa)). Residues 170 to 661 (TFGARIIGSY…TFTFQTAFKF (492 aa)) enclose the TBDR beta-barrel domain.

Belongs to the TonB-dependent receptor family.

It localises to the cell outer membrane. In terms of biological role, heme transporter. The chain is Heme transporter BhuA (bhuA) from Brucella ovis (strain ATCC 25840 / 63/290 / NCTC 10512).